The following is a 328-amino-acid chain: Cytochrome c biogenesis protein CcsA (328 aa).

The next 8 membrane-spanning stretches (helical) occupy residues 13 to 33 (ISFS…LVNL), 46 to 66 (GIII…IFSG), 73 to 93 (LYES…ISFF), 101 to 121 (LNAI…SGLL), 146 to 166 (MVLG…LLVI), 234 to 254 (IISL…VWAN), 263 to 283 (WDPK…YLHI), and 295 to 315 (AIVA…VNLL).

This sequence belongs to the CcmF/CycK/Ccl1/NrfE/CcsA family. May interact with Ccs1.

The protein resides in the plastid. It is found in the chloroplast thylakoid membrane. Functionally, required during biogenesis of c-type cytochromes (cytochrome c6 and cytochrome f) at the step of heme attachment. In Aethionema grandiflorum (Persian stone-cress), this protein is Cytochrome c biogenesis protein CcsA.